A 181-amino-acid polypeptide reads, in one-letter code: PLAT domain-containing protein 1 (181 aa).

The N-terminal stretch at Met-1–Leu-14 is a signal peptide. At Ala-15 the chain carries N-acetylalanine. Residues Cys-29 to Asn-156 form the PLAT domain.

In terms of tissue distribution, expressed in root tips, pericycle cells, lateral root primordia, stomata, leaf vasculature, hydathodes and floral organs.

The protein resides in the endoplasmic reticulum. The protein localises to the plastid. It is found in the chloroplast. Its subcellular location is the plastoglobule. Its function is as follows. Positive regulator of abiotic stress tolerance involved in the regulation of plant growth. May be a downstream target of the abscisic acid (ABA) signaling pathway. The sequence is that of PLAT domain-containing protein 1 from Arabidopsis thaliana (Mouse-ear cress).